The sequence spans 311 residues: MKKGNKTVWNECIDILDNVKSPSFSANFDDYFKKSKSKPPKKNKKVLNNIKKAELKLKKKANKKQKANTLYIPPFAQQAKGIVITINKMWKNVHNDDSKQEISILSDVSLQIAYGEIVIILGSSGSGKTTLLNLIGGYDSISLGSCIVANCPLEKCTSEQLLTYRKNNLGYVYQRYNLIELLSAYDNIAISQNLIPKYQRRLDIEELAEKLDIKEILYKFPYEMSGGQKQRVAIARAIIKEPKLLLCDEPTGALDSNSAENIINLLQTINKTYKQTILMVTHDVSLTRIANRIIKISDGKIVSNQLVRPLV.

Residues 84 to 310 (ITINKMWKNV…IVSNQLVRPL (227 aa)) enclose the ABC transporter domain. 122–129 (GSSGSGKT) contacts ATP.

This sequence belongs to the ABC transporter superfamily.

This chain is Putative ABC transporter ATP-binding protein MG467, found in Mycoplasma genitalium (strain ATCC 33530 / DSM 19775 / NCTC 10195 / G37) (Mycoplasmoides genitalium).